The sequence spans 414 residues: Enterobactin exporter EntS (414 aa).

At 1–21 (MNRQSWLLNLSLLKTHPAFRA) the chain is on the cytoplasmic side. The chain crosses the membrane as a helical span at residues 22–42 (VFLARFISIVSLGLLGVAVPV). The Periplasmic portion of the chain corresponds to 43–55 (QIQMMTHSTWQVG). Residues 56–76 (LSVTLTGGAMFIGLMVGGVLA) traverse the membrane as a helical segment. Over 77-83 (DRYERKK) the chain is Cytoplasmic. The helical transmembrane segment at 84–104 (VILLARGTCGIGFIGLCVNAL) threads the bilayer. At 105–109 (LPEPS) the chain is on the periplasmic side. A helical membrane pass occupies residues 110 to 130 (LLAIYLLGLWDGFFASLGVTA). The Cytoplasmic segment spans residues 131 to 156 (LLAATPALVGRENLMQAGAITMLTVR). A helical membrane pass occupies residues 157–177 (LGSVISPMLGGILLASGGVAW). Position 178 (Asn178) is a topological domain, periplasmic. The helical transmembrane segment at 179 to 199 (YGLAAAGTFITLLPLLTLPRL) threads the bilayer. The Cytoplasmic portion of the chain corresponds to 200–218 (PVPPQPRENPFIALLAAFR). A helical membrane pass occupies residues 219 to 239 (FLLASPLIGGIALLGGLVTMA). Over 240 to 256 (SAVRVLYPALAMSWQMS) the chain is Periplasmic. The helical transmembrane segment at 257-277 (AAQIGLLYAAIPLGAAIGALT) threads the bilayer. Over 278–287 (SGQLAHSVRP) the chain is Cytoplasmic. The chain crosses the membrane as a helical span at residues 288 to 307 (GLIMLVSTVGSFLAVGLFAI). At 308–313 (MPVWIA) the chain is on the periplasmic side. A helical transmembrane segment spans residues 314–336 (GVICLALFGWLSAISSLLQYTLL). Over 337–356 (QTQTPENMLGRMNGLWTAQN) the chain is Cytoplasmic. A helical membrane pass occupies residues 357-377 (VTGDAIGAALLGGLGAMMTPV). Residue Ala378 is a topological domain, periplasmic. A helical transmembrane segment spans residues 379-399 (SASVSGFGLVIIGLLLLLVLG). Residues 400–414 (ELRRFRQTPPVSDAG) lie on the Cytoplasmic side of the membrane.

Belongs to the major facilitator superfamily. EntS (TC 2.A.1.38) family.

Its subcellular location is the cell inner membrane. In terms of biological role, component of an export pathway for enterobactin. The protein is Enterobactin exporter EntS of Salmonella typhimurium (strain LT2 / SGSC1412 / ATCC 700720).